The sequence spans 194 residues: Large ribosomal subunit protein eL15 (194 aa).

The segment covering 162 to 173 (KTSAGRRARGLH) has biased composition (basic residues). Residues 162-194 (KTSAGRRARGLHNRGTGTEKCRPSLTSHKNQGK) form a disordered region. A compositionally biased stretch (polar residues) spans 185–194 (SLTSHKNQGK).

The protein belongs to the eukaryotic ribosomal protein eL15 family.

The chain is Large ribosomal subunit protein eL15 from Methanocorpusculum labreanum (strain ATCC 43576 / DSM 4855 / Z).